The chain runs to 788 residues: Integrin beta-6 (788 aa).

Residues 1-21 (MGIELLCLFFLFLGRNDHVQG) form the signal peptide. The region spanning 22–71 (GCALGGAETCEDCLLIGPQCAWCSQENFTYLSGVGERCDTPANLLAKGCQ) is the PSI domain. Residues 22 to 709 (GCALGGAETC…KDCPKPPNSP (688 aa)) are Extracellular-facing. 28 cysteine pairs are disulfide-bonded: C23–C41, C31–C454, C34–C59, C44–C70, C197–C204, C252–C293, C394–C406, C426–C452, C456–C476, C467–C479, C481–C490, C492–C519, C502–C517, C511–C522, C524–C537, C539–C560, C544–C558, C552–C563, C565–C574, C576–C599, C583–C597, C591–C602, C604–C614, C617–C620, C624–C670, C630–C649, C633–C645, and C678–C702. N-linked (GlcNAc...) asparagine glycans are attached at residues N48 and N97. The VWFA domain occupies 131-371 (YPVDLYYLMD…QLIISAYEEL (241 aa)). The Mg(2+) site is built by D140, S142, and S144. Residues S144, D147, D148, and E179 each coordinate Ca(2+). The Ca(2+) site is built by N235, D237, P239, and E240. E240 contributes to the Mg(2+) binding site. N-linked (GlcNAc...) asparagine glycosylation is present at N260. Residues D271 and K355 each contribute to the Ca(2+) site. N-linked (GlcNAc...) asparagine glycosylation occurs at N387. N418 carries N-linked (GlcNAc...) asparagine glycosylation. I-EGF domains lie at 456–491 (CQKE…PHCE), 492–538 (CGED…PYCQ), 539–575 (CDDF…EYCN), and 576–615 (CTTS…LTCE). Residues N463 and N471 are each glycosylated (N-linked (GlcNAc...) asparagine). Residues 710 to 730 (MIMLGVSLAILLIGVVLLCIW) form a helical membrane-spanning segment. Residues 731 to 758 (KLLVSFHDRKEVAKFEAERSKAKWQTGT) form an interaction with HAX1 region. The Cytoplasmic portion of the chain corresponds to 731-788 (KLLVSFHDRKEVAKFEAERSKAKWQTGTNPLYRGSTSTFKNVTYKHREKQKVDLSMDG).

This sequence belongs to the integrin beta chain family. In terms of assembly, heterodimer of an alpha and a beta subunit. Interacts with FLNB. Interacts with HAX1. ITGAV:ITGB6 interacts with FBN1. ITGAV:ITGB6 interacts with TGFB1.

It localises to the cell membrane. Its subcellular location is the cell junction. It is found in the focal adhesion. Its function is as follows. Integrin alpha-V:beta-6 (ITGAV:ITGB6) is a receptor for fibronectin and cytotactin. It recognizes the sequence R-G-D in its ligands. ITGAV:ITGB6 acts as a receptor for fibrillin-1 (FBN1) and mediates R-G-D-dependent cell adhesion to FBN1. Integrin alpha-V:beta-6 (ITGAV:ITGB6) mediates R-G-D-dependent release of transforming growth factor beta-1 (TGF-beta-1) from regulatory Latency-associated peptide (LAP), thereby playing a key role in TGF-beta-1 activation. This is Integrin beta-6 (ITGB6) from Sus scrofa (Pig).